Reading from the N-terminus, the 118-residue chain is Basic phospholipase A2 PA-12C (118 aa).

7 disulfides stabilise this stretch: Cys-11/Cys-71, Cys-27/Cys-117, Cys-29/Cys-45, Cys-44/Cys-98, Cys-51/Cys-91, Cys-60/Cys-84, and Cys-78/Cys-89. Ca(2+)-binding residues include Tyr-28, Gly-30, and Gly-32. The active site involves His-48. A Ca(2+)-binding site is contributed by Asp-49. Residue Asp-92 is part of the active site.

It belongs to the phospholipase A2 family. Group I subfamily. D49 sub-subfamily. Ca(2+) serves as cofactor. As to expression, expressed by the venom gland.

Its subcellular location is the secreted. It catalyses the reaction a 1,2-diacyl-sn-glycero-3-phosphocholine + H2O = a 1-acyl-sn-glycero-3-phosphocholine + a fatty acid + H(+). PLA2 catalyzes the calcium-dependent hydrolysis of the 2-acyl groups in 3-sn-phosphoglycerides. The protein is Basic phospholipase A2 PA-12C of Pseudechis australis (Mulga snake).